A 382-amino-acid chain; its full sequence is UDP-N-acetylglucosamine--N-acetylmuramyl-(pentapeptide) pyrophosphoryl-undecaprenol N-acetylglucosamine transferase (382 aa).

Residues T22–G24, N134, R186, S212, A285–E290, and Q311 each bind UDP-N-acetyl-alpha-D-glucosamine.

Belongs to the glycosyltransferase 28 family. MurG subfamily.

Its subcellular location is the cell inner membrane. It catalyses the reaction di-trans,octa-cis-undecaprenyl diphospho-N-acetyl-alpha-D-muramoyl-L-alanyl-D-glutamyl-meso-2,6-diaminopimeloyl-D-alanyl-D-alanine + UDP-N-acetyl-alpha-D-glucosamine = di-trans,octa-cis-undecaprenyl diphospho-[N-acetyl-alpha-D-glucosaminyl-(1-&gt;4)]-N-acetyl-alpha-D-muramoyl-L-alanyl-D-glutamyl-meso-2,6-diaminopimeloyl-D-alanyl-D-alanine + UDP + H(+). It functions in the pathway cell wall biogenesis; peptidoglycan biosynthesis. In terms of biological role, cell wall formation. Catalyzes the transfer of a GlcNAc subunit on undecaprenyl-pyrophosphoryl-MurNAc-pentapeptide (lipid intermediate I) to form undecaprenyl-pyrophosphoryl-MurNAc-(pentapeptide)GlcNAc (lipid intermediate II). This chain is UDP-N-acetylglucosamine--N-acetylmuramyl-(pentapeptide) pyrophosphoryl-undecaprenol N-acetylglucosamine transferase, found in Pseudoalteromonas atlantica (strain T6c / ATCC BAA-1087).